Reading from the N-terminus, the 154-residue chain is Large-conductance mechanosensitive channel (154 aa).

2 helical membrane-spanning segments follow: residues 12-32 and 71-91; these read GNIVDLAVAVVIGTAFTALIT and IVLSAAINFLLIALVVYFLVV. The disordered stretch occupies residues 129 to 154; sequence NGAPSGRHVDTADLTPTPNHEPRADT.

It belongs to the MscL family. In terms of assembly, homopentamer.

The protein localises to the cell membrane. Functionally, channel that opens in response to stretch forces in the membrane lipid bilayer. May participate in the regulation of osmotic pressure changes within the cell. This chain is Large-conductance mechanosensitive channel, found in Mycobacterium leprae (strain Br4923).